We begin with the raw amino-acid sequence, 400 residues long: Acetate kinase (400 aa).

Asn9 provides a ligand contact to Mg(2+). Lys16 is an ATP binding site. Arg90 lines the substrate pocket. Asp147 serves as the catalytic Proton donor/acceptor. ATP is bound by residues 207–211, 282–284, and 330–334; these read HIGNG, DLR, and GIGEN. Glu385 contributes to the Mg(2+) binding site.

The protein belongs to the acetokinase family. In terms of assembly, homodimer. Mg(2+) is required as a cofactor. Mn(2+) serves as cofactor.

Its subcellular location is the cytoplasm. The catalysed reaction is acetate + ATP = acetyl phosphate + ADP. The protein operates within metabolic intermediate biosynthesis; acetyl-CoA biosynthesis; acetyl-CoA from acetate: step 1/2. Functionally, catalyzes the formation of acetyl phosphate from acetate and ATP. Can also catalyze the reverse reaction. In Staphylococcus aureus (strain USA300), this protein is Acetate kinase.